The chain runs to 874 residues: UPF0182 protein Sfum_2137 (874 aa).

Transmembrane regions (helical) follow at residues 7-27 (WPLIILIGILGISAVVILSSL), 57-77 (IVFGAVTLLFFLIFFLNFWVA), 110-130 (SLWVYTPLSLILAVIIALPIF), 171-191 (RRLLIAFVLLLVGLVALYLLE), 208-228 (LHLSILILLIFLIETWDYVLQ), 252-272 (VIWALIWLTLFFLMGTAFSMI), and 283-303 (PLVVFAVGFVLVLGLRYSAFL).

It belongs to the UPF0182 family.

The protein localises to the cell membrane. This Syntrophobacter fumaroxidans (strain DSM 10017 / MPOB) protein is UPF0182 protein Sfum_2137.